The chain runs to 555 residues: Connector enhancer of kinase suppressor of ras 3 (555 aa).

Residues tryptophan 7–leucine 72 form the SAM domain. The region spanning asparagine 80 to alanine 174 is the CRIC domain. Positions glutamate 211–proline 293 constitute a PDZ domain. Disordered stretches follow at residues tryptophan 309–leucine 334, proline 347–glutamine 390, and isoleucine 517–serine 537. The DUF1170 domain maps to serine 325–tryptophan 546. Phosphoserine is present on residues serine 381 and serine 383.

Belongs to the CNKSR family. In terms of assembly, interacts with epithelial sodium channel ENaC. Interacts directly with SCNN1A (ENaC subunit alpha) and SCNN1B (ENaC subunit beta) C-terminal tails. Interacts with ENaC regulatory proteins NEDD4L, RAF1 and SGK1.

Its subcellular location is the cytoplasm. It is found in the apical cell membrane. Involved in transepithelial sodium transport. Regulates aldosterone-induced and epithelial sodium channel (ENaC)-mediated sodium transport through regulation of ENaC cell surface expression. Acts as a scaffold protein coordinating the assembly of an ENaC-regulatory complex (ERC). This is Connector enhancer of kinase suppressor of ras 3 (CNKSR3) from Homo sapiens (Human).